Reading from the N-terminus, the 162-residue chain is Photosystem II extrinsic protein V (162 aa).

A signal peptide spans 1-26 (MFNKNFWTSIIIGCLFCTITYSGVNA). Residues C62, C65, H66, and H117 each contribute to the heme c site.

It belongs to the cytochrome c family. PsbV subfamily. PSII is composed of 1 copy each of membrane proteins PsbA, PsbB, PsbC, PsbD, PsbE, PsbF, PsbH, PsbI, PsbJ, PsbK, PsbL, PsbM, PsbT, PsbX, PsbY, PsbZ, Psb30/Ycf12, at least 3 peripheral proteins of the oxygen-evolving complex and a large number of cofactors. It forms dimeric complexes. Requires heme c as cofactor.

The protein localises to the plastid. The protein resides in the cyanelle thylakoid membrane. In terms of biological role, one of the extrinsic, lumenal subunits of photosystem II (PSII). PSII is a light-driven water plastoquinone oxidoreductase, using light energy to abstract electrons from H(2)O, generating a proton gradient subsequently used for ATP formation. The extrinsic proteins stabilize the structure of photosystem II oxygen-evolving complex (OEC), the ion environment of oxygen evolution and protect the OEC against heat-induced inactivation. The sequence is that of Photosystem II extrinsic protein V from Cyanophora paradoxa.